A 144-amino-acid polypeptide reads, in one-letter code: MRLNTLSPAAGAKSAAKRVGRGIGSGLGKTAGRGHKGQKSRSGGGVRVGFEGGQMPLKIRLPKFGFTSRRALVSAEVRISELAKVNGDVIDLNALKDANLVTRNIQFAKIVLSGTIERPVTVKGLKVTKGARAAIEAAGGKIEE.

The segment at 1-49 (MRLNTLSPAAGAKSAAKRVGRGIGSGLGKTAGRGHKGQKSRSGGGVRVG) is disordered. Over residues 21–31 (RGIGSGLGKTA) the composition is skewed to gly residues.

The protein belongs to the universal ribosomal protein uL15 family. In terms of assembly, part of the 50S ribosomal subunit.

In terms of biological role, binds to the 23S rRNA. The protein is Large ribosomal subunit protein uL15 of Shewanella piezotolerans (strain WP3 / JCM 13877).